The sequence spans 677 residues: Pro-neuregulin-1, membrane-bound isoform (677 aa).

Residues 1–12 (MAEKKKVKEGKG) are compositionally biased toward basic and acidic residues. Disordered stretches follow at residues 1–43 (MAEK…KEIK) and 78–106 (GAKN…ISKA). The Extracellular portion of the chain corresponds to 1 to 260 (MAEKKKVKEG…MEAEELYQKR (260 aa)). The segment covering 13–24 (RKGKGKKDRKGK) has biased composition (basic residues). Residues 37–132 (PKLKEIKTQS…GNDTVTVNVT (96 aa)) form the Ig-like C2-type domain. Cysteines 57 and 116 form a disulfide. A compositionally biased stretch (basic and acidic residues) spans 78-91 (GAKNKPDSKPEHIK). N-linked (GlcNAc...) asparagine glycans are attached at residues asparagine 124 and asparagine 130. The 45-residue stretch at 188–232 (HLIKCSDKEKTYCVNGGECYVLNGITSSNQFMCKCKPGFTGARCT) folds into the EGF-like domain. Intrachain disulfides connect cysteine 192–cysteine 206, cysteine 200–cysteine 220, and cysteine 222–cysteine 231. A helical transmembrane segment spans residues 261–280 (VLTITGICIDLLVVGDMCVV). Over 281 to 677 (DAYCKTKKQR…RKMTCKTLFI (397 aa)) the chain is Cytoplasmic. Positions 294–315 (NDRLRQSLRERNKNITNKDNRP) are enriched in basic and acidic residues. 5 disordered regions span residues 294-326 (NDRL…PRKN), 350-375 (ETSF…PSHS), 397-418 (SVEN…GIGG), 457-479 (VEFK…ESSL), and 503-617 (PPRL…FLSI). Positions 351–375 (TSFSTSHYTSTTHHSTTVTQTPSHS) are enriched in low complexity. Polar residues predominate over residues 397 to 407 (SVENSRHTSPT). Basic and acidic residues predominate over residues 505–515 (RLREKRYDRKT). The segment covering 568-578 (VNSRRQKRTKP) has biased composition (basic residues). Residues 591–600 (DSSSESSTSE) show a composition bias toward low complexity.

This sequence belongs to the neuregulin family. Post-translationally, proteolytic cleavage close to the plasma membrane on the external face leads to the release of the soluble growth factor form. Extensive glycosylation precedes the proteolytic cleavage. Isoform alpha1 is expressed in brain and muscle. Isoform CRD is expressed in brain and spinal cord, but at very low level in muscle.

The protein localises to the cell membrane. Its subcellular location is the secreted. In terms of biological role, direct ligand for the ERBB tyrosine kinase receptors. Induces expression of acetylcholine receptor in synaptic nuclei. This is Pro-neuregulin-1, membrane-bound isoform (nrg1) from Xenopus laevis (African clawed frog).